The chain runs to 494 residues: 2,3-bisphosphoglycerate-independent phosphoglycerate mutase (494 aa).

Positions 12 and 62 each coordinate Mn(2+). S62 functions as the Phosphoserine intermediate in the catalytic mechanism. Residues H121, 150-151 (RD), R181, R187, 252-255 (RSDR), and K317 contribute to the substrate site. Mn(2+) contacts are provided by D384, H388, D425, H426, and H443.

The protein belongs to the BPG-independent phosphoglycerate mutase family. In terms of assembly, monomer. Requires Mn(2+) as cofactor.

It catalyses the reaction (2R)-2-phosphoglycerate = (2R)-3-phosphoglycerate. Its pathway is carbohydrate degradation; glycolysis; pyruvate from D-glyceraldehyde 3-phosphate: step 3/5. In terms of biological role, catalyzes the interconversion of 2-phosphoglycerate and 3-phosphoglycerate. The protein is 2,3-bisphosphoglycerate-independent phosphoglycerate mutase of Anaplasma marginale (strain St. Maries).